The sequence spans 581 residues: Chaotic nuclear migration protein 67 (581 aa).

Residues Ser-17, Ser-20, Ser-72, Ser-85, and Ser-89 each carry the phosphoserine modification. Positions 86 to 150 (YQESPGLQER…PTDEHTSPDI (65 aa)) are disordered. The span at 94–114 (ERPKNEKDKSPIGTDVHKKDV) shows a compositional bias: basic and acidic residues. A Phosphoserine modification is found at Ser-151. Coiled-coil stretches lie at residues 179 to 252 (LGYQ…DTIQ), 306 to 363 (FLCA…LSKQ), and 373 to 451 (KLTI…NTSE).

As to quaternary structure, interacts directly with ADY3 and YOR129C. Interacts with ADY4. Probable component of a SPB complex composed of ADY3, SSP1, DON1, MPC54, SPO21/MPC70, NUD1 and CNM67. In terms of processing, phosphorylated in its N-terminal part.

Its subcellular location is the cytoplasm. It is found in the cytoskeleton. It localises to the microtubule organizing center. The protein localises to the spindle pole body. Its function is as follows. Involved in the pathway that organizes the shaping and sizing of the prospore membrane (PSM) during sporulation. Required for the proper formation of the spindle pole body (SPB) outer plaque. May connect the outer plaque to the central plaque embedded in the nuclear envelope. This chain is Chaotic nuclear migration protein 67 (CNM67), found in Saccharomyces cerevisiae (strain ATCC 204508 / S288c) (Baker's yeast).